We begin with the raw amino-acid sequence, 553 residues long: Meiotic expression up-regulated protein 18 (553 aa).

The segment at 267–305 (SNETLCSNDSKHRIARLKNEDNTQKPISKKRKSKKASHK) is disordered. Residues 275–289 (DSKHRIARLKNEDNT) are compositionally biased toward basic and acidic residues. The span at 293–304 (ISKKRKSKKASH) shows a compositional bias: basic residues.

This is Meiotic expression up-regulated protein 18 (meu18) from Schizosaccharomyces pombe (strain 972 / ATCC 24843) (Fission yeast).